Reading from the N-terminus, the 1150-residue chain is MKQIKKLLVANRGEIAIRIFRAAAELDISTVAIYSNEDKSSLHRYKADESYLVGSDLGPAESYLNIERIIDVAKQANVDAIHPGYGFLSENEQFARRCAEEGIKFIGPHLEHLDMFGDKVKARTTAIKADLPVIPGTDGPIKSYELAKEFAEEAGFPLMIKATSGGGGKGMRIVREESELEDAFHRAKSEAEKSFGNSEVYIERYIDNPKHIEVQVIGDEHGNIVHLFERDCSVQRRHQKVVEVAPSVGLSPTLRQRICDAAIQLMENIKYVNAGTVEFLVSGDEFFFIEVNPRVQVEHTITEMVTGIDIVKTQILVAAGADLFGEEINMPQQKDITTLGYAIQCRITTEDPLNDFMPDTGTIIAYRSSGGFGVRLDAGDGFQGAEISPYYDSLLVKLSTHAISFKQAEEKMVRSLREMRIRGVKTNIPFLINVMKNKKFTSGDYTTKFIEETPELFDIQPSLDRGTKTLEYIGNVTINGFPNVEKRPKPDYELASIPTVSSSKIASFSGTKQLLDEVGPKGVAEWVKKQDDVLLTDTTFRDAHQSLLATRVRTKDMINIASKTADVFKDGFSLEMWGGATFDVAYNFLKENPWERLERLRKAIPNVLFQMLLRASNAVGYKNYPDNVIHKFVQESAKAGIDVFRIFDSLNWVDQMKVANEAVQEAGKISEGTICYTGDILNPERSNIYTLEYYVKLAKELEREGFHILAIKDMAGLLKPKAAYELIGELKSAVDLPIHLHTHDTSGNGLLTYKQAIDAGVDIIDTAVASMSGLTSQPSANSLYYALNGFPRHLRTDIEGMESLSHYWSTVRTYYSDFESDIKSPNTEIYQHEMPGGQYSNLSQQAKSLGLGERFDEVKDMYRRVNFLFGDIVKVTPSSKVVGDMALYMVQNDLDEQSVITDGYKLDFPESVVSFFKGEIGQPVNGFNKDLQAVILKGQEALTARPGEYLEPVDFEKVRELLEEEQQGPVTEQDIISYVLYPKVYEQYIQTRNQYGNLSLLDTPTFFFGMRNGETVEIEIDKGKRLIIKLETISEPDENGNRTIYYAMNGQARRIYIKDENVHTNANVKPKADKSNPSHIGAQMPGSVTEVKVSVGETVKANQPLLITEAMKMETTIQAPFDGVIKQVTVNNGDTIATGDLLIEIEKATD.

A Biotin carboxylation domain is found at 3–455; that stretch reads QIKKLLVANR…TTKFIEETPE (453 aa). Lys119, Lys161, His211, and Glu278 together coordinate ATP. The ATP-grasp domain maps to 123–319; it reads RTTAIKADLP…IVKTQILVAA (197 aa). Residue Arg294 is part of the active site. One can recognise a Pyruvate carboxyltransferase domain in the interval 533 to 802; sequence VLLTDTTFRD…HLRTDIEGME (270 aa). 541 to 545 lines the substrate pocket; that stretch reads RDAHQ. Mn(2+) contacts are provided by Asp542, Lys712, His741, and His743. Lys712 carries the N6-carboxylysine modification. Residues 1071 to 1146 form the Biotinyl-binding domain; it reads KADKSNPSHI…ATGDLLIEIE (76 aa). An N6-biotinyllysine modification is found at Lys1112.

In terms of assembly, homotetramer. Requires biotin as cofactor.

The catalysed reaction is hydrogencarbonate + pyruvate + ATP = oxaloacetate + ADP + phosphate + H(+). In terms of biological role, catalyzes a 2-step reaction, involving the ATP-dependent carboxylation of the covalently attached biotin in the first step and the transfer of the carboxyl group to pyruvate in the second. The chain is Pyruvate carboxylase (pycA) from Staphylococcus aureus (strain Mu50 / ATCC 700699).